The chain runs to 328 residues: Integrator complex subunit 12 (328 aa).

Residues 1-45 form a sufficient for binding to IntS1 and IntS9 and for 3'-end snRNA processing region; the sequence is MAANIAAAAAAAQEVDPVLKKAIKLLHSSNPTSAAELRLLLDEAL. The PHD-type zinc finger occupies 128-185; it reads DLNCCVCGEMVFTATNRLIECSKCGAMYHQECHKPPITKEEAADDQEQNWQCDTCCNK. Low complexity-rich tracts occupy residues 215–233, 241–264, 274–283, and 292–311; these read KAKS…NSSS, SSST…SSSS, KSTAASSLSA, and SSGT…SKSS. The segment at 215–328 is disordered; the sequence is KAKSSVASSR…GSSSKRRSKQ (114 aa).

The protein belongs to the Integrator subunit 12 family. In terms of assembly, belongs to the multiprotein complex Integrator, at least composed of IntS1, IntS2, IntS3, IntS4, omd/IntS5, IntS6, defl/IntS7, IntS8, IntS9, IntS10, IntS11, IntS12, asun/IntS13, IntS14 and IntS15. The core complex associates with protein phosphatase 2A subunits mts/PP2A and Pp2A-29B, to form the Integrator-PP2A (INTAC) complex. Within the complex, interacts with IntS1 and IntS9. Interaction with IntS1 is likely to be important for promoting 3'-end processing of snRNAs.

The protein localises to the nucleus. Its function is as follows. Component of the integrator complex, a multiprotein complex that terminates RNA polymerase II (Pol II) transcription in the promoter-proximal region of genes. The integrator complex provides a quality checkpoint during transcription elongation by driving premature transcription termination of transcripts that are unfavorably configured for transcriptional elongation: the complex terminates transcription by (1) catalyzing dephosphorylation of the C-terminal domain (CTD) of Pol II subunit Polr2A/Rbp1 and Spt5, and (2) degrading the exiting nascent RNA transcript via endonuclease activity. The integrator complex is also involved in the 3'-end processing of the U7 snRNA, and also the spliceosomal snRNAs U1, U2, U4 and U5. Required for the normal expression of the Integrator complex component IntS1. This chain is Integrator complex subunit 12, found in Drosophila melanogaster (Fruit fly).